A 941-amino-acid polypeptide reads, in one-letter code: Protocadherin alpha-12 (941 aa).

An N-terminal signal peptide occupies residues 1–29; that stretch reads MVIIGPRGPGSQRLLLSLLLLAAWEVGSG. 6 consecutive Cadherin domains span residues 30-133, 134-242, 243-350, 351-455, 456-565, and 581-678; these read QLHY…PPVF, RERE…GPAF, DKPS…VPEV, MVTS…APAF, AQPE…APAL, and VPRS…APKT. Residues 30–697 are Extracellular-facing; the sequence is QLHYSVYEEA…DPEAALVDIN (668 aa). N-linked (GlcNAc...) asparagine glycosylation is found at Asn257 and Asn265. A glycan (N-linked (GlcNAc...) asparagine) is linked at Asn548. Residues 698–718 traverse the membrane as a helical segment; it reads VYLIIAICAVSSLLVLTLLLY. Topologically, residues 719 to 941 are cytoplasmic; that stretch reads TALRCSAPPT…GNSTTDNSDQ (223 aa). PXXP repeat units follow at residues 734 to 737, 790 to 793, 823 to 826, 863 to 866, and 882 to 885; these read PGKP, PRQP, PGGP, GPGN, and PGSP. The 5 X 4 AA repeats of P-X-X-P stretch occupies residues 734–885; that stretch reads PGKPTLVCSS…PDKFIIPGSP (152 aa). Residues 818-941 are disordered; sequence ILRAGPGGPD…GNSTTDNSDQ (124 aa). Over residues 900-914 the composition is skewed to basic and acidic residues; that stretch reads DKSDFITFGKKEETK.

The protein resides in the cell membrane. Potential calcium-dependent cell-adhesion protein. May be involved in the establishment and maintenance of specific neuronal connections in the brain. This is Protocadherin alpha-12 (PCDHA12) from Pan troglodytes (Chimpanzee).